A 60-amino-acid chain; its full sequence is Small ribosomal subunit protein eS31 (60 aa).

Residues Cys32, Cys35, Cys50, and Cys53 each coordinate Zn(2+). Residues 32-53 form a C4-type zinc finger; sequence CPRCGAGVFMGEHKDRFSCGKC.

It belongs to the eukaryotic ribosomal protein eS31 family. Part of the 30S ribosomal subunit. The cofactor is Zn(2+).

This is Small ribosomal subunit protein eS31 from Methanocorpusculum labreanum (strain ATCC 43576 / DSM 4855 / Z).